The chain runs to 204 residues: N-(5'-phosphoribosyl)anthranilate isomerase (204 aa).

It belongs to the TrpF family.

It carries out the reaction N-(5-phospho-beta-D-ribosyl)anthranilate = 1-(2-carboxyphenylamino)-1-deoxy-D-ribulose 5-phosphate. The protein operates within amino-acid biosynthesis; L-tryptophan biosynthesis; L-tryptophan from chorismate: step 3/5. The sequence is that of N-(5'-phosphoribosyl)anthranilate isomerase from Bacillus cereus (strain G9842).